Consider the following 236-residue polypeptide: Sensory rhodopsin II (236 aa).

Transmembrane regions (helical) follow at residues 4–24, 38–58, 73–93, 101–121, 122–142, 167–187, and 196–216; these read ITTW…VLAY, LLLI…ALGF, YVDW…LAGA, LVVL…TPSP, VSYA…YLLY, FVVV…AGVG, and LVVV…ALLA. At Lys-206 the chain carries N6-(retinylidene)lysine.

It belongs to the archaeal/bacterial/fungal opsin family. The covalent binding of retinal to the apoprotein, bacterioopsin, generates bacteriorhodopsin.

It localises to the membrane. Mediates the photorepellent response. The chain is Sensory rhodopsin II (sop2) from Haloarcula marismortui (strain ATCC 43049 / DSM 3752 / JCM 8966 / VKM B-1809) (Halobacterium marismortui).